An 88-amino-acid chain; its full sequence is MGIARILSAVLFLSVLFVVTFPTLLSADHHDGRIDTCRLPSDRGRCKASFERWYFNGTTCTKFVYGGYGGNDNRFPTEKACMKRCAKA.

A signal peptide spans 1–27 (MGIARILSAVLFLSVLFVVTFPTLLSA). Residues 28–33 (DHHDGR) constitute a propeptide that is removed on maturation. One can recognise a BPTI/Kunitz inhibitor domain in the interval 37–85 (CRLPSDRGRCKASFERWYFNGTTCTKFVYGGYGGNDNRFPTEKACMKRC). Intrachain disulfides connect Cys-37–Cys-85 and Cys-60–Cys-81.

Belongs to the venom Kunitz-type family. 01 (intermediate) subfamily. Expressed by the venom gland.

The protein localises to the secreted. In terms of biological role, serine protease inhibitor that inhibits trypsin at a molar ratio of 1:1. The protein is Kunitz-type kappaPI-theraphotoxin-Hs1d of Cyriopagopus schmidti (Chinese bird spider).